The chain runs to 317 residues: DNA-directed RNA polymerase subunit alpha 2 (317 aa).

An alpha N-terminal domain (alpha-NTD) region spans residues 1–227 (MALENLLHPT…NQLRNIVDIE (227 aa)). Residues 241-317 (INPILLKHVE…TLIENWPQDL (77 aa)) are alpha C-terminal domain (alpha-CTD).

It belongs to the RNA polymerase alpha chain family. Homodimer. The RNAP catalytic core consists of 2 alpha, 1 beta, 1 beta' and 1 omega subunit. When a sigma factor is associated with the core the holoenzyme is formed, which can initiate transcription.

It catalyses the reaction RNA(n) + a ribonucleoside 5'-triphosphate = RNA(n+1) + diphosphate. Its function is as follows. DNA-dependent RNA polymerase catalyzes the transcription of DNA into RNA using the four ribonucleoside triphosphates as substrates. The polypeptide is DNA-directed RNA polymerase subunit alpha 2 (Francisella tularensis subsp. holarctica (strain LVS)).